A 330-amino-acid chain; its full sequence is Protein rlx (330 aa).

The segment at 220–330 (LGEDYDKGGL…EKTRGFDLEL (111 aa)) is disordered. Composition is skewed to basic and acidic residues over residues 237 to 269 (NEQREEQARQRELEQARREKIKRDKEREKEWAR) and 279 to 330 (QNRE…DLEL).

Its function is as follows. This protein is probably required for relaxation complex formation and plasmid mobilization by conjugative plasmids. The polypeptide is Protein rlx (rlx) (Staphylococcus aureus).